Consider the following 201-residue polypeptide: Ras-related protein Rab-1B (201 aa).

The residue at position 1 (Met1) is an N-acetylmethionine. Residues Ser17, Gly18, Val19, Gly20, Lys21, Ser22, Cys23, Tyr33, Thr34, Glu35, Ser36, Ser39, and Thr40 each contribute to the GTP site. Ser22 lines the Mg(2+) pocket. A Switch 1 motif is present at residues 30–45; the sequence is DDTYTESYISTIGVDF. Mg(2+) contacts are provided by Thr40 and Asp63. Residues 64-83 are switch 2 region; required for interaction with REP1/CHM; the sequence is TAGQERFRTITSSYYRGAHG. Residues 65–80 carry the Switch 2 motif; it reads AGQERFRTITSSYYRG. Gly66, Asn121, Lys122, Asp124, Ser151, Ala152, and Lys153 together coordinate GTP. The disordered stretch occupies residues 174 to 201; the sequence is GPGAASGGERPNLKIDSTPVKPASGGCC. S-geranylgeranyl cysteine attachment occurs at residues Cys200 and Cys201. Cysteine methyl ester is present on Cys201.

It belongs to the small GTPase superfamily. Rab family. As to quaternary structure, interacts with MICAL1 and MICAL2. Interacts (GTP-bound form) with MICALCL, MICAL1 and MILCAL3. Interacts with GDI1; the interaction requires the GDP-bound state. Interacts with CHM/REP1; the interaction requires the GDP-bound form and is necessary for prenylation by GGTase II. Interacts with RabGAP TBC1D20. Interacts (in GDP-bound form) with lipid phosphatase MTMR6 (via GRAM domain); the interaction regulates MTMR6 recruitment to the endoplasmic reticulum-Golgi intermediate compartment. Interacts (in GDP-bound form) with lipid phosphatase MTMR7. Mg(2+) serves as cofactor. Post-translationally, prenylated; by GGTase II, only after interaction of the substrate with Rab escort protein 1 (REP1).

The protein localises to the cytoplasm. It is found in the membrane. The protein resides in the preautophagosomal structure membrane. It localises to the perinuclear region. It carries out the reaction GTP + H2O = GDP + phosphate + H(+). Regulated by guanine nucleotide exchange factors (GEFs) which promote the exchange of bound GDP for free GTP. Regulated by GTPase activating proteins (GAPs) including TBC1D20 which increases the GTP hydrolysis activity. Inhibited by GDP dissociation inhibitors (GDIs). In terms of biological role, the small GTPases Rab are key regulators of intracellular membrane trafficking, from the formation of transport vesicles to their fusion with membranes. Rabs cycle between an inactive GDP-bound form and an active GTP-bound form that is able to recruit to membranes different set of downstream effectors directly responsible for vesicle formation, movement, tethering and fusion. Plays a role in the initial events of the autophagic vacuole development which take place at specialized regions of the endoplasmic reticulum. Regulates vesicular transport between the endoplasmic reticulum and successive Golgi compartments. Required to modulate the compacted morphology of the Golgi. Promotes the recruitment of lipid phosphatase MTMR6 to the endoplasmic reticulum-Golgi intermediate compartment. The protein is Ras-related protein Rab-1B (Rab1b) of Mus musculus (Mouse).